The primary structure comprises 430 residues: Glutamate-1-semialdehyde 2,1-aminomutase (430 aa).

At Lys-270 the chain carries N6-(pyridoxal phosphate)lysine.

Belongs to the class-III pyridoxal-phosphate-dependent aminotransferase family. HemL subfamily. In terms of assembly, homodimer. Pyridoxal 5'-phosphate serves as cofactor.

It is found in the cytoplasm. It carries out the reaction (S)-4-amino-5-oxopentanoate = 5-aminolevulinate. It functions in the pathway porphyrin-containing compound metabolism; protoporphyrin-IX biosynthesis; 5-aminolevulinate from L-glutamyl-tRNA(Glu): step 2/2. This is Glutamate-1-semialdehyde 2,1-aminomutase from Cupriavidus metallidurans (strain ATCC 43123 / DSM 2839 / NBRC 102507 / CH34) (Ralstonia metallidurans).